Here is a 614-residue protein sequence, read N- to C-terminus: Fem-3 mRNA-binding factor 1 (614 aa).

Residues 1-24 (MDQSKMRYTNQFRKTPQKPTSTEV) show a composition bias toward polar residues. The tract at residues 1–34 (MDQSKMRYTNQFRKTPQKPTSTEVGNHHTPAHSP) is disordered. One can recognise a PUM-HD domain in the interval 160–564 (TRSNNVLPTW…KMIETLAHLR (405 aa)). Pumilio repeat units lie at residues 185–223 (EVLD…QLFE), 224–263 (QVIG…NIKR), 269–305 (NFIS…KLVQ), 306–342 (ALPR…EFIV), 343–382 (DFVA…DLTS), 398–434 (SVTN…CIIE), 436–471 (CLMR…EMMD), and 483–519 (TGKD…RQTK). The segment at 283 to 614 (FACRVIQSSL…NLRLMRTFSP (332 aa)) is binding to gld-3 isoform A.

In terms of assembly, interacts (via C-terminus) with gld-3 isoform A in an RNA-independent manner. In terms of tissue distribution, expressed specifically in the germline (at protein level).

It is found in the cytoplasm. Functionally, RNA-binding protein that binds to the consensus sequence 5'-UGUGCCAUA-3' in mRNA 3'-UTRs. Involved in the control of stem cells and sex determination in the C.elegans hermaphrodite germline. May also play a role in the hermaphrodite germline proliferation and oogenesis. Binds specifically to the regulatory region of fem-3 3'-UTR and mediates the sperm/oocyte switch. Negatively regulates gld-3 expression, possibly by directly binding to two sites within the 3'-UTR of gld-3 isoform b. In association with the cye-1/cdk-2 complex, negatively regulates gld-1 expression in the distal germline cells of the mitotic zone. By binding to the 3'-UTR, represses phosphatase lip-1 expression in the distal part of the germline mitotic zone. Suppresses germline tumor formation by preventing the dedifferentiation of secondary spermatocytes. This is Fem-3 mRNA-binding factor 1 (fbf-1) from Caenorhabditis elegans.